We begin with the raw amino-acid sequence, 1162 residues long: Paired amphipathic helix protein Sin3-like 5 (1162 aa).

Positions 1–37 (MKRVREEVYVEPQMRGPTVSSRGETNGRPSTISGGGT) are disordered. A compositionally biased stretch (polar residues) spans 18–30 (TVSSRGETNGRPS). 2 consecutive PAH domains span residues 28-109 (RPST…LPKG) and 123-193 (KPVD…LPDF). Disordered stretches follow at residues 702-727 (RVSD…ESCE), 743-779 (QKLP…DDDN), 803-830 (GGQV…SNEG), and 1121-1143 (KKAT…ELSR). Residue Ser-817 is modified to Phosphoserine. A compositionally biased stretch (polar residues) spans 1123–1139 (ATLNPTGPENVKTSDSS).

The protein resides in the nucleus. Its function is as follows. Acts as a transcriptional repressor. Plays roles in regulating gene expression and genome stability. The polypeptide is Paired amphipathic helix protein Sin3-like 5 (SNL5) (Arabidopsis thaliana (Mouse-ear cress)).